Here is a 1396-residue protein sequence, read N- to C-terminus: Probable ATP-dependent RNA helicase spindle-E (1396 aa).

The segment at 1-34 (MDEAAGPSTSRTSNLEDVDDEGASLAEEDEEHTK) is disordered. Acidic residues predominate over residues 16-30 (EDVDDEGASLAEEDE). Residues 68 to 234 (LDKIRSNAVV…FKIPKKSGYL (167 aa)) enclose the Helicase ATP-binding domain. 81–88 (GATGCGKT) is a binding site for ATP. The DEAH box motif lies at 180 to 183 (DEVH). Positions 292–468 (KGQEFGDSLE…TVVLKAKLLE (177 aa)) constitute a Helicase C-terminal domain. The 66-residue stretch at 885-950 (NFAMGQMVAA…RQLDDSLGQL (66 aa)) folds into the Tudor domain.

Belongs to the DEAD box helicase family. DEAH subfamily.

Its subcellular location is the cytoplasm. The catalysed reaction is ATP + H2O = ADP + phosphate + H(+). Functionally, probable ATP-binding RNA helicase which plays a central role during gametogenesis by repressing transposable elements and preventing their mobilization, which is essential for the germline integrity. Acts via the piRNA metabolic process, which mediates the repression of transposable elements during meiosis by forming complexes composed of piRNAs and Piwi proteins and govern the methylation and subsequent repression of transposons. This is Probable ATP-dependent RNA helicase spindle-E (spn-E) from Culex quinquefasciatus (Southern house mosquito).